Reading from the N-terminus, the 66-residue chain is Large ribosomal subunit protein uL29 (66 aa).

It belongs to the universal ribosomal protein uL29 family.

This chain is Large ribosomal subunit protein uL29, found in Syntrophobacter fumaroxidans (strain DSM 10017 / MPOB).